Consider the following 279-residue polypeptide: Pantothenate synthetase (279 aa).

26 to 33 contributes to the ATP binding site; it reads MGNLHEGH. H33 serves as the catalytic Proton donor. A (R)-pantoate-binding site is contributed by Q57. Q57 is a binding site for beta-alanine. 144 to 147 is a binding site for ATP; it reads GKKD. A (R)-pantoate-binding site is contributed by Q150. ATP-binding positions include V173 and 181-184; that span reads LSSR.

This sequence belongs to the pantothenate synthetase family. Homodimer.

The protein localises to the cytoplasm. It carries out the reaction (R)-pantoate + beta-alanine + ATP = (R)-pantothenate + AMP + diphosphate + H(+). The protein operates within cofactor biosynthesis; (R)-pantothenate biosynthesis; (R)-pantothenate from (R)-pantoate and beta-alanine: step 1/1. In terms of biological role, catalyzes the condensation of pantoate with beta-alanine in an ATP-dependent reaction via a pantoyl-adenylate intermediate. The chain is Pantothenate synthetase from Burkholderia orbicola (strain MC0-3).